Reading from the N-terminus, the 231-residue chain is MTFVDNFEFNQNTPRLVRGPFIILNSIIFSLSFILLCSTGIIIYYLNEYYLVKDLTIPLGSFILSAYMVITTIVGGIAIWKKKLGLHLTFMVFLVVLIVCLVGVSAKMIVDSGNPEKLQHKIENIWYKVGNYQHHSKHYHHGIIEIIEKHHRCCGWSKEIEGNYCVHFNRRESGHGYCAPYVEKSVESILKYLGYYGIVLSVIELILLILSGFFLLKTNKNVKSKSFILQD.

The Cytoplasmic segment spans residues 1–21 (MTFVDNFEFNQNTPRLVRGPF). A helical transmembrane segment spans residues 22-42 (IILNSIIFSLSFILLCSTGII). Residues 43–58 (IYYLNEYYLVKDLTIP) are Extracellular-facing. Residues 59-79 (LGSFILSAYMVITTIVGGIAI) form a helical membrane-spanning segment. Topologically, residues 80 to 83 (WKKK) are cytoplasmic. A helical transmembrane segment spans residues 84-104 (LGLHLTFMVFLVVLIVCLVGV). Residues 105 to 195 (SAKMIVDSGN…VESILKYLGY (91 aa)) are Extracellular-facing. A helical membrane pass occupies residues 196–216 (YGIVLSVIELILLILSGFFLL). Over 217-231 (KTNKNVKSKSFILQD) the chain is Cytoplasmic.

It belongs to the tetraspanin (TM4SF) family.

It localises to the membrane. In Dictyostelium discoideum (Social amoeba), this protein is Probable tetraspanin tspE (tspE).